Consider the following 393-residue polypeptide: S-adenosylmethionine sensor upstream of mTORC1 (393 aa).

The disordered stretch occupies residues 1-35 (MDLRSSAETDPDLSENHPGSVPAELQSRKQEQEKL). Arg-94 contributes to the S-adenosyl-L-methionine binding site. A disordered region spans residues 118–141 (DEKSARHATAGNANTDTNAPPQLS). The span at 125-136 (ATAGNANTDTNA) shows a compositional bias: low complexity. 5 residues coordinate S-adenosyl-L-methionine: Gly-160, Asp-178, Asp-190, Phe-191, and Ser-232. The segment at 362–393 (ELPETPYDSDSGESQSSSAPFYELEDPILLQS) is disordered.

It belongs to the BMT2/SAMTOR family. Interacts with the GATOR1 complex; interaction is disrupted when samtor binds S-adenosyl-L-methionine. Interacts with the KICSTOR complex; interaction is disrupted when bmt2/samtor binds S-adenosyl-L-methionine.

Functionally, S-adenosyl-L-methionine-binding protein that acts as an inhibitor of mTORC1 signaling via interaction with the GATOR1 and KICSTOR complexes. Acts as a sensor of S-adenosyl-L-methionine to signal methionine sufficiency to mTORC1: in presence of methionine, binds S-adenosyl-L-methionine, leading to disrupt interaction with the GATOR1 and KICSTOR complexes and promote mTORC1 signaling. Upon methionine starvation, S-adenosyl-L-methionine levels are reduced, thereby promoting the association with GATOR1 and KICSTOR, leading to inhibit mTORC1 signaling. Probably also acts as a S-adenosyl-L-methionine-dependent methyltransferase. In Danio rerio (Zebrafish), this protein is S-adenosylmethionine sensor upstream of mTORC1.